A 501-amino-acid chain; its full sequence is Lysine--tRNA ligase (501 aa).

2 residues coordinate Mg(2+): glutamate 411 and glutamate 418.

This sequence belongs to the class-II aminoacyl-tRNA synthetase family. Homodimer. The cofactor is Mg(2+).

The protein resides in the cytoplasm. The catalysed reaction is tRNA(Lys) + L-lysine + ATP = L-lysyl-tRNA(Lys) + AMP + diphosphate. The protein is Lysine--tRNA ligase of Aliivibrio salmonicida (strain LFI1238) (Vibrio salmonicida (strain LFI1238)).